A 466-amino-acid polypeptide reads, in one-letter code: Asparagine--tRNA ligase (466 aa).

This sequence belongs to the class-II aminoacyl-tRNA synthetase family. As to quaternary structure, homodimer.

It localises to the cytoplasm. It carries out the reaction tRNA(Asn) + L-asparagine + ATP = L-asparaginyl-tRNA(Asn) + AMP + diphosphate + H(+). This chain is Asparagine--tRNA ligase, found in Shewanella sediminis (strain HAW-EB3).